The following is a 256-amino-acid chain: Diacetyl reductase [(S)-acetoin forming] (256 aa).

NAD(+)-binding positions include 6–33 (LVTG…AIAD) and Asp-59. Residue Ser-139 participates in substrate binding. Tyr-152 functions as the Proton acceptor in the catalytic mechanism. Lys-156 contributes to the NAD(+) binding site.

The protein belongs to the short-chain dehydrogenases/reductases (SDR) family. Homotetramer.

The enzyme catalyses (S)-acetoin + NAD(+) = diacetyl + NADH + H(+). In terms of biological role, catalyzes the reversible reduction of (S)-acetoin to 2,3-butanediol in the presence of NADH. The polypeptide is Diacetyl reductase [(S)-acetoin forming] (budC) (Klebsiella pneumoniae).